The following is a 584-amino-acid chain: Leucine-rich repeat and fibronectin type III domain-containing protein 1 (584 aa).

A signal peptide spans 1–17 (MERLVFCVLVFGALAKA). Positions 18-51 (QLCPGRCICQTISPTLTLLCAKTGLLFVPPTVDR) constitute an LRRNT domain. Topologically, residues 18–494 (QLCPGRCICQ…VPSQFLGGTM (477 aa)) are extracellular. LRR repeat units follow at residues 52–73 (KTVELRLTDNFITAVRRKDFLN), 76–97 (SLVHLTLSRNTISQIAPHAFMG), 100–121 (SLRALHMDGNRLSVINSDQLKG), 124–145 (NLRHLILGNNQIHHIEESSFDE), 149–170 (TIEDLDLSYNNLRTLPWEAIAR), 173–194 (NINTLTLDHNLIDHIGVGTFTL), and 197–218 (KLVRLDMTSNRLQTLPPDTLFQ). N-linked (GlcNAc...) asparagine glycosylation occurs at asparagine 73. An LRRCT domain is found at 241 to 287 (NPLHCNCELLWLRRLTREDDLETCASPEHLMDKYFWSIQEEEFICEP). Residues 288 to 375 (PLITKHQVTK…GIATAAVHVH (88 aa)) enclose the Ig-like domain. Cysteine 310 and cysteine 359 are joined by a disulfide. 5 N-linked (GlcNAc...) asparagine glycosylation sites follow: asparagine 332, asparagine 341, asparagine 384, asparagine 408, and asparagine 421. Residues 393–414 (DPGLSDISTSSRSSSNDSKTHS) are disordered. The segment covering 397–409 (SDISTSSRSSSND) has biased composition (low complexity). The helical transmembrane segment at 495–515 (IIIIGGIIVASVLVFIIILMI) threads the bilayer. Residues 516–584 (RYKAYSGGGG…MVLPILHLLF (69 aa)) are Cytoplasmic-facing. Residues 539 to 564 (HVHSQTNGSRSAATKQSEEPPESPAG) are disordered. Over residues 540–553 (VHSQTNGSRSAATK) the composition is skewed to polar residues.

The protein belongs to the LRFN family.

The protein localises to the membrane. Its subcellular location is the synapse. Functionally, involved in the regulation of excitatory synapses. The protein is Leucine-rich repeat and fibronectin type III domain-containing protein 1 (lrfn1) of Danio rerio (Zebrafish).